Here is a 429-residue protein sequence, read N- to C-terminus: Saccharopine dehydrogenase-like oxidoreductase (429 aa).

An N-acetylalanine modification is found at Ala2. Ser217 is modified (phosphoserine).

Belongs to the saccharopine dehydrogenase family.

This Homo sapiens (Human) protein is Saccharopine dehydrogenase-like oxidoreductase (SCCPDH).